We begin with the raw amino-acid sequence, 839 residues long: Putative AC9 transposase (839 aa).

The segment covering 32-43 has biased composition (polar residues); it reads SSSNANGTATDP. The interval 32 to 85 is disordered; sequence SSSNANGTATDPSQDDMAIVHEPQPQPQPQPEPQPQPQPEPEEEAPQKRAKKCT. Over residues 55–70 the composition is skewed to pro residues; the sequence is QPQPQPQPEPQPQPQP.

This is Putative AC9 transposase from Zea mays (Maize).